Here is a 158-residue protein sequence, read N- to C-terminus: Transcription factor bHLH146 (158 aa).

Over residues 77–90 (SSSSNPTTTTSSSS) the composition is skewed to low complexity. Positions 77–110 (SSSSNPTTTTSSSSDGIRILERPDKEGGNEEGGI) are disordered. Basic and acidic residues predominate over residues 94-110 (RILERPDKEGGNEEGGI). One can recognise a bHLH; atypical domain in the interval 94 to 143 (RILERPDKEGGNEEGGIEERLRELKKLLPGGEEMNVEEMLSEIGNYIKCL).

The protein belongs to the bHLH protein family.

The protein localises to the nucleus. In Arabidopsis thaliana (Mouse-ear cress), this protein is Transcription factor bHLH146 (BHLH146).